We begin with the raw amino-acid sequence, 308 residues long: Type II restriction enzyme MamI (308 aa).

The enzyme catalyses Endonucleolytic cleavage of DNA to give specific double-stranded fragments with terminal 5'-phosphates.. In terms of biological role, a P subtype restriction enzyme that recognizes the double-stranded sequence 5'-GATNNNNATC-3' and cleaves after N-5. The polypeptide is Type II restriction enzyme MamI (Microbacterium ammoniaphilum).